A 544-amino-acid polypeptide reads, in one-letter code: CTP synthase (544 aa).

The interval 1-265 (MARFIFITGG…DKAVLSAFGL (265 aa)) is amidoligase domain. S13 serves as a coordination point for CTP. S13 contacts UTP. Position 14 to 19 (14 to 19 (SLGKGL)) interacts with ATP. Y54 serves as a coordination point for L-glutamine. D71 is a binding site for ATP. Residues D71 and E139 each coordinate Mg(2+). CTP is bound by residues 146–148 (DIE), 186–191 (KTKPTQ), and K222. UTP is bound by residues 186–191 (KTKPTQ) and K222. Residues 291–543 (TIGVVGKYVG…VAAALKQSRL (253 aa)) form the Glutamine amidotransferase type-1 domain. Residue G355 participates in L-glutamine binding. C382 functions as the Nucleophile; for glutamine hydrolysis in the catalytic mechanism. Residues 383–386 (LGMQ), E406, and R471 contribute to the L-glutamine site. Catalysis depends on residues H516 and E518.

It belongs to the CTP synthase family. In terms of assembly, homotetramer.

The enzyme catalyses UTP + L-glutamine + ATP + H2O = CTP + L-glutamate + ADP + phosphate + 2 H(+). It carries out the reaction L-glutamine + H2O = L-glutamate + NH4(+). It catalyses the reaction UTP + NH4(+) + ATP = CTP + ADP + phosphate + 2 H(+). It functions in the pathway pyrimidine metabolism; CTP biosynthesis via de novo pathway; CTP from UDP: step 2/2. Its activity is regulated as follows. Allosterically activated by GTP, when glutamine is the substrate; GTP has no effect on the reaction when ammonia is the substrate. The allosteric effector GTP functions by stabilizing the protein conformation that binds the tetrahedral intermediate(s) formed during glutamine hydrolysis. Inhibited by the product CTP, via allosteric rather than competitive inhibition. In terms of biological role, catalyzes the ATP-dependent amination of UTP to CTP with either L-glutamine or ammonia as the source of nitrogen. Regulates intracellular CTP levels through interactions with the four ribonucleotide triphosphates. The polypeptide is CTP synthase (Zymomonas mobilis subsp. mobilis (strain ATCC 31821 / ZM4 / CP4)).